A 78-amino-acid polypeptide reads, in one-letter code: Small ribosomal subunit protein bS20 (78 aa).

Belongs to the bacterial ribosomal protein bS20 family.

Binds directly to 16S ribosomal RNA. The sequence is that of Small ribosomal subunit protein bS20 from Streptococcus thermophilus (strain ATCC BAA-491 / LMD-9).